The sequence spans 402 residues: Tryptophan synthase beta chain (402 aa).

Lysine 88 carries the N6-(pyridoxal phosphate)lysine modification.

Belongs to the TrpB family. Tetramer of two alpha and two beta chains. Pyridoxal 5'-phosphate serves as cofactor.

It carries out the reaction (1S,2R)-1-C-(indol-3-yl)glycerol 3-phosphate + L-serine = D-glyceraldehyde 3-phosphate + L-tryptophan + H2O. Its pathway is amino-acid biosynthesis; L-tryptophan biosynthesis; L-tryptophan from chorismate: step 5/5. Functionally, the beta subunit is responsible for the synthesis of L-tryptophan from indole and L-serine. The chain is Tryptophan synthase beta chain (trpB) from Pasteurella multocida (strain Pm70).